We begin with the raw amino-acid sequence, 699 residues long: Proline-rich receptor-like protein kinase PERK7 (699 aa).

Positions 1 to 167 (MAEGQSPENS…TSNSGSNSSS (167 aa)) are disordered. Topologically, residues 1 to 172 (MAEGQSPENS…SNSSSNDGLN (172 aa)) are extracellular. Composition is skewed to pro residues over residues 9–23 (NSPP…PSPP) and 43–68 (SPPP…PPLP). The N-linked (GlcNAc...) asparagine glycan is linked to Asn-70. A compositionally biased stretch (low complexity) spans 100-121 (PPQQSDNNGNKGNNNENNKGND). Asn-131 carries an N-linked (GlcNAc...) asparagine glycan. The segment covering 148-158 (HSQPRSLAPPT) has biased composition (polar residues). Asn-164 carries N-linked (GlcNAc...) asparagine glycosylation. Residues 173–193 (IGAVIGLVAAAGILFIVMILL) form a helical membrane-spanning segment. The Cytoplasmic segment spans residues 194–699 (CVCCFRKKKK…SKTTTTNRGI (506 aa)). The residue at position 325 (Thr-325) is a Phosphothreonine. Residues 336 to 615 (FSKDRLLGQG…VRTLEGDASL (280 aa)) enclose the Protein kinase domain. ATP is bound by residues 342–350 (LGQGGFGYV) and Lys-364. Position 410 is a phosphotyrosine (Tyr-410). Asp-461 acts as the Proton acceptor in catalysis. Ser-465 and Ser-494 each carry phosphoserine. 2 positions are modified to phosphothreonine: Thr-495 and Thr-500. At Tyr-508 the chain carries Phosphotyrosine. Disordered stretches follow at residues 609 to 639 (LEGD…DYEM) and 658 to 699 (DYGA…NRGI). Polar residues predominate over residues 687–699 (GSTSKTTTTNRGI).

Belongs to the protein kinase superfamily. Ser/Thr protein kinase family. As to expression, mostly expressed in flower buds.

The protein resides in the cell membrane. It carries out the reaction L-seryl-[protein] + ATP = O-phospho-L-seryl-[protein] + ADP + H(+). The catalysed reaction is L-threonyl-[protein] + ATP = O-phospho-L-threonyl-[protein] + ADP + H(+). The protein is Proline-rich receptor-like protein kinase PERK7 (PERK7) of Arabidopsis thaliana (Mouse-ear cress).